A 678-amino-acid chain; its full sequence is Glycine--tRNA ligase beta subunit (678 aa).

It belongs to the class-II aminoacyl-tRNA synthetase family. In terms of assembly, tetramer of two alpha and two beta subunits.

The protein resides in the cytoplasm. The catalysed reaction is tRNA(Gly) + glycine + ATP = glycyl-tRNA(Gly) + AMP + diphosphate. This is Glycine--tRNA ligase beta subunit from Streptococcus pneumoniae serotype 19F (strain G54).